A 404-amino-acid polypeptide reads, in one-letter code: Keratin, type I cuticular Ha3-I (404 aa).

The tract at residues 1 to 56 is head; it reads MPYNCCLPAMSCRTSCSSRPCVPPSCHGCTLPGACNIPANVGNCNWFCEGSFNGNE. Residues 56 to 367 form the IF rod domain; the sequence is EKETMQFLND…GLLESEDCKL (312 aa). The segment at 57 to 91 is coil 1A; sequence KETMQFLNDRLASYMEKVRQLERENAELECRIQER. Positions 92 to 102 are linker 1; that stretch reads NQQQDPLVCPA. Residues 103 to 203 are coil 1B; sequence YQAYFRTIEE…HEQEVNTLRC (101 aa). Positions 204–219 are linker 12; the sequence is QLGDRLNVEVDAAPTV. The coil 2 stretch occupies residues 220 to 363; it reads DLNRVLNETR…NTYRGLLESE (144 aa). Residues 364–404 form a tail region; it reads DCKLPCNPCATTNACDKPIGPCVPNPCVTRPRCGPCNTFVR.

This sequence belongs to the intermediate filament family.

This chain is Keratin, type I cuticular Ha3-I, found in Mus musculus (Mouse).